Here is a 570-residue protein sequence, read N- to C-terminus: Sulfite reductase [NADPH] hemoprotein beta-component (570 aa).

Residues Cys-434, Cys-440, Cys-479, and Cys-483 each contribute to the [4Fe-4S] cluster site. Cys-483 is a binding site for siroheme.

The protein belongs to the nitrite and sulfite reductase 4Fe-4S domain family. In terms of assembly, alpha(8)-beta(8). The alpha component is a flavoprotein, the beta component is a hemoprotein. It depends on siroheme as a cofactor. [4Fe-4S] cluster is required as a cofactor.

The enzyme catalyses hydrogen sulfide + 3 NADP(+) + 3 H2O = sulfite + 3 NADPH + 4 H(+). Its pathway is sulfur metabolism; hydrogen sulfide biosynthesis; hydrogen sulfide from sulfite (NADPH route): step 1/1. Its function is as follows. Component of the sulfite reductase complex that catalyzes the 6-electron reduction of sulfite to sulfide. This is one of several activities required for the biosynthesis of L-cysteine from sulfate. This is Sulfite reductase [NADPH] hemoprotein beta-component from Salmonella enteritidis PT4 (strain P125109).